The chain runs to 257 residues: K88 minor fimbrial subunit FaeJ (257 aa).

An N-terminal signal peptide occupies residues Met-1–Ala-26.

It is found in the fimbrium. K88 minor fimbrial subunit, plays an essential role in the biogenesis of the K88 fimbriae. Fimbriae (also called pili), are polar filaments radiating from the surface of the bacterium to a length of 0.5-1.5 micrometers and numbering 100-300 per cell. They enable bacteria to colonize the epithelium of specific host organs. The protein is K88 minor fimbrial subunit FaeJ (faeJ) of Escherichia coli.